The following is a 332-amino-acid chain: UDP-N-acetylenolpyruvoylglucosamine reductase (332 aa).

The region spanning 55 to 221 is the FAD-binding PCMH-type domain; that stretch reads VGGAADLYVA…TQATLQLAPG (167 aa). Arg200 is a catalytic residue. Catalysis depends on Ser251, which acts as the Proton donor. Glu321 is an active-site residue.

It belongs to the MurB family. FAD serves as cofactor.

It localises to the cytoplasm. It carries out the reaction UDP-N-acetyl-alpha-D-muramate + NADP(+) = UDP-N-acetyl-3-O-(1-carboxyvinyl)-alpha-D-glucosamine + NADPH + H(+). It functions in the pathway cell wall biogenesis; peptidoglycan biosynthesis. Cell wall formation. This chain is UDP-N-acetylenolpyruvoylglucosamine reductase, found in Nostoc punctiforme (strain ATCC 29133 / PCC 73102).